Here is a 257-residue protein sequence, read N- to C-terminus: uncharacterized protein (257 aa).

NAD(+) is bound by residues aspartate 34, aspartate 60, valine 61, asparagine 87, tyrosine 152, and lysine 156. Tyrosine 152 (proton acceptor) is an active-site residue.

It belongs to the short-chain dehydrogenases/reductases (SDR) family.

This is an uncharacterized protein from Bacillus subtilis (strain 168).